The primary structure comprises 316 residues: ATP synthase gamma chain (316 aa).

This sequence belongs to the ATPase gamma chain family. As to quaternary structure, F-type ATPases have 2 components, CF(1) - the catalytic core - and CF(0) - the membrane proton channel. CF(1) has five subunits: alpha(3), beta(3), gamma(1), delta(1), epsilon(1). CF(0) has three main subunits: a, b and c.

The protein resides in the cellular thylakoid membrane. Its function is as follows. Produces ATP from ADP in the presence of a proton gradient across the membrane. The gamma chain is believed to be important in regulating ATPase activity and the flow of protons through the CF(0) complex. This Synechococcus sp. (strain ATCC 27144 / PCC 6301 / SAUG 1402/1) (Anacystis nidulans) protein is ATP synthase gamma chain.